The following is a 95-amino-acid chain: Mammaglobin-B (95 aa).

The N-terminal stretch at 1–18 (MKLLMVLMLAALLLHCYA) is a signal peptide. The N-linked (GlcNAc...) asparagine glycan is linked to N68.

Heterodimer of a lipophilin A and a lipophilin C (mammaglobin B) monomer associated head to head. As to expression, expressed in thymus, trachea, kidney, steroid responsive tissues (prostate, testis, uterus, breast and ovary) and salivary gland.

It is found in the secreted. In terms of biological role, may bind androgens and other steroids, may also bind estramustine, a chemotherapeutic agent used for prostate cancer. May be under transcriptional regulation of steroid hormones. This Homo sapiens (Human) protein is Mammaglobin-B (SCGB2A1).